Reading from the N-terminus, the 98-residue chain is NADH-ubiquinone oxidoreductase chain 4L (98 aa).

The next 3 membrane-spanning stretches (helical) occupy residues 1 to 21, 29 to 49, and 61 to 81; these read MSLT…GLLM, SLLC…MTIL, and IILL…LVMV.

The protein belongs to the complex I subunit 4L family. In terms of assembly, core subunit of respiratory chain NADH dehydrogenase (Complex I) which is composed of 45 different subunits.

It is found in the mitochondrion inner membrane. It catalyses the reaction a ubiquinone + NADH + 5 H(+)(in) = a ubiquinol + NAD(+) + 4 H(+)(out). Core subunit of the mitochondrial membrane respiratory chain NADH dehydrogenase (Complex I) which catalyzes electron transfer from NADH through the respiratory chain, using ubiquinone as an electron acceptor. Part of the enzyme membrane arm which is embedded in the lipid bilayer and involved in proton translocation. The sequence is that of NADH-ubiquinone oxidoreductase chain 4L (MT-ND4L) from Chiroderma trinitatum (Little big-eyed bat).